The chain runs to 855 residues: Mitofusin FZO1 (855 aa).

Basic and acidic residues predominate over residues 1 to 19; it reads MSEGKQQFKDSNKPHKDST. Residues 1 to 27 form a disordered region; it reads MSEGKQQFKDSNKPHKDSTDQDDDAAT. The Cytoplasmic segment spans residues 1–705; that stretch reads MSEGKQQFKD…PSLLFTSKIP (705 aa). The segment at 91–190 is HRN; that stretch reads NYNNNRVLLK…KRVDDVSSKV (100 aa). The 284-residue stretch at 184-467 folds into the Dynamin-type G domain; sequence DDVSSKVFIT…KKRSLSKLLP (284 aa). GTP is bound by residues 197–202 and 370–373; these read NTGKSA and KKFD. Lysine 398 participates in a covalent cross-link: Glycyl lysine isopeptide (Lys-Gly) (interchain with G-Cter in ubiquitin). Serine 408 is a binding site for GTP. The span at 413 to 433 shows a compositional bias: basic and acidic residues; that stretch reads ELPHYHNENDNEDHGDRKPDD. Residues 413–447 form a disordered region; the sequence is ELPHYHNENDNEDHGDRKPDDDPYSSSDPDPDFDS. Lysine 464 is covalently cross-linked (Glycyl lysine isopeptide (Lys-Gly) (interchain with G-Cter in ubiquitin)). The HR1 stretch occupies residues 484–547; sequence KSNMKMYSEE…KEALLNALDV (64 aa). The segment at 630-843 is required for interaction with UGO1; that stretch reads GKRLKVSLSI…QSLYEGTVAQ (214 aa). Residues 706–726 traverse the membrane as a helical segment; that stretch reads TLTLYFLGSTKVVGNIILNGI. Residues 727–736 are Mitochondrial intermembrane-facing; that stretch reads KLSSWSSLKK. Residues 737 to 757 traverse the membrane as a helical segment; it reads LSVPVIVVGSLLGLTYLIHDL. Residues 758–855 lie on the Cytoplasmic side of the membrane; sequence PRALPMNLSI…MVEEINLDID (98 aa). Residues 769-831 are HR2; the sequence is YKRKLQELDY…KKESNLLSIK (63 aa). A coiled-coil region spans residues 798 to 825; that stretch reads TREILRSCEIIMDKKQITKKELENKKES.

This sequence belongs to the TRAFAC class dynamin-like GTPase superfamily. Dynamin/Fzo/YdjA family. Mitofusin subfamily. As to quaternary structure, homodimer. Dimerization depends on GTP binding. Component of a large multiprotein complex of 800 kDa. Binds the cytoplasmic domain of UGO1 which binds MGM1 through its intermembrane space domain. Interacts with MDM30. Interacts with UBP2 and UBP12. Interacts (when ubiquitinated) with DOA1; the interaction recruits FZO1 to CDC48 and promotes FZO1 proteasomal degradation. Ubiquitinated at Lys-398 and Lys-464. MDM30 and UGO1 are involved in ubiquitination. Deubiquitinated by UBP2 and UBP12. UBP2 and UBP12 recognize distinct ubiquitin chains on FZO1 that have opposing effects on mitochondrial fusion. UBP2 removes ubiquitin chains that initiate proteolysis of FZO1 and inhibit fusion. UBP12 recognizes ubiquitin chains that stabilize FZO1 and promote mitochondrial fusion. UBP12 deubiquitylates FZO1 only after oligomerization.

The protein resides in the mitochondrion outer membrane. The catalysed reaction is GTP + H2O = GDP + phosphate + H(+). Essential transmembrane GTPase, which mediates mitochondrial fusion. Fusion proceeds through several steps; first mitochondria are tethered together, then brought into close contact, followed by the formation of a docking ring around contact areas, and finally membrane fusion. Fusion of mitochondria occurs in many cell types and constitutes an important step in mitochondrial morphology, which is balanced between fusion and fission, mediated by FZO1 and DNM1, respectively. Functions antagonistically with DNM1. Probably acts by forming membrane contact sites that mediate mitochondrial membrane fusion. Mitochondrial docking and fusion requires GTP hydrolysis. Mitochondrial fusion also promotes increased lifespan. The sequence is that of Mitofusin FZO1 (FZO1) from Saccharomyces cerevisiae (strain ATCC 204508 / S288c) (Baker's yeast).